A 374-amino-acid polypeptide reads, in one-letter code: MPLFNSPFADLDLIRQPEQANDPLLAFDAADQYLLEHLAAQAPAANCKVLVLNDSFGALAASLAGRLEVISSGDSHLARMALEKNLARNGKGFDSVPFMPANETWQGPFDRVLVRVPKTLALLEEQLIRLQGQLAPGAQVIAGAMIKHLPRAAGDLMEKYIGPVQASLAQKKARLLTATVAERPLASSPYPSRYRLDSPALELVNHANVFCREGLDIGTRAFLPHLPRNLGQARVADLGCGNGVLAIASALANPDAHYTLVDESYMAVQSARDNWQAALGERAVEIHAADGLAGQEKQSLEVVLCNPPFHQQQVVGDFLAWRMFQQAREALVVGGALYIVGNRHLGYHSKLARLFRGVEQVAATPKFVVLKARK.

Belongs to the methyltransferase superfamily. RlmG family.

It localises to the cytoplasm. It catalyses the reaction guanosine(1835) in 23S rRNA + S-adenosyl-L-methionine = N(2)-methylguanosine(1835) in 23S rRNA + S-adenosyl-L-homocysteine + H(+). Functionally, specifically methylates the guanine in position 1835 (m2G1835) of 23S rRNA. This is Ribosomal RNA large subunit methyltransferase G from Pseudomonas entomophila (strain L48).